A 417-amino-acid chain; its full sequence is Gamma-glutamyl phosphate reductase (417 aa).

This sequence belongs to the gamma-glutamyl phosphate reductase family.

Its subcellular location is the cytoplasm. It catalyses the reaction L-glutamate 5-semialdehyde + phosphate + NADP(+) = L-glutamyl 5-phosphate + NADPH + H(+). It participates in amino-acid biosynthesis; L-proline biosynthesis; L-glutamate 5-semialdehyde from L-glutamate: step 2/2. Its function is as follows. Catalyzes the NADPH-dependent reduction of L-glutamate 5-phosphate into L-glutamate 5-semialdehyde and phosphate. The product spontaneously undergoes cyclization to form 1-pyrroline-5-carboxylate. The sequence is that of Gamma-glutamyl phosphate reductase from Legionella pneumophila (strain Lens).